The primary structure comprises 939 residues: Aconitate hydratase A (939 aa).

Residues 433-453 are disordered; sequence GSGESLATGAEGRPSKPVTVA. Positions 475, 541, and 544 each coordinate [4Fe-4S] cluster.

The protein belongs to the aconitase/IPM isomerase family. Monomer. Requires [4Fe-4S] cluster as cofactor.

The catalysed reaction is citrate = D-threo-isocitrate. It catalyses the reaction (2S,3R)-3-hydroxybutane-1,2,3-tricarboxylate = 2-methyl-cis-aconitate + H2O. It functions in the pathway carbohydrate metabolism; tricarboxylic acid cycle; isocitrate from oxaloacetate: step 2/2. Its pathway is organic acid metabolism; propanoate degradation. Functionally, involved in the catabolism of short chain fatty acids (SCFA) via the tricarboxylic acid (TCA)(acetyl degradation route) and probably via the 2-methylcitrate cycle I (propionate degradation route). Catalyzes the reversible isomerization of citrate to isocitrate via cis-aconitate. Could catalyze the hydration of 2-methyl-cis-aconitate to yield (2R,3S)-2-methylisocitrate. The apo form of AcnA functions as a RNA-binding regulatory protein. This Corynebacterium glutamicum (strain ATCC 13032 / DSM 20300 / JCM 1318 / BCRC 11384 / CCUG 27702 / LMG 3730 / NBRC 12168 / NCIMB 10025 / NRRL B-2784 / 534) protein is Aconitate hydratase A (acn).